A 107-amino-acid chain; its full sequence is Thioredoxin-1 (107 aa).

The region spanning Ala-2 to Lys-106 is the Thioredoxin domain. Catalysis depends on nucleophile residues Cys-31 and Cys-34. The cysteines at positions 31 and 34 are disulfide-linked.

The protein belongs to the thioredoxin family. Ovary specific. Expressed present in the nurse cells from stage 9 of ovary development and is transported into the oocyte. Expressed throughout oogenesis.

Its subcellular location is the nucleus. In terms of biological role, participates in various redox reactions through the reversible oxidation of its active center dithiol to a disulfide and catalyzes dithiol-disulfide exchange reactions. As a reducing substrate of peroxiredoxin 1, thioredoxin 2 is preferred over thioredoxin 1. Required for female meiosis and early embryonic development. This is Thioredoxin-1 (dhd) from Drosophila melanogaster (Fruit fly).